The primary structure comprises 447 residues: tRNA (guanine(37)-N(1))-methyltransferase (447 aa).

Residues H241, 285–286 (DL), and 313–314 (DV) each bind S-adenosyl-L-methionine.

This sequence belongs to the class I-like SAM-binding methyltransferase superfamily. TRM5/TYW2 family. In terms of assembly, monomer.

The protein resides in the mitochondrion matrix. It localises to the nucleus. The protein localises to the cytoplasm. It carries out the reaction guanosine(37) in tRNA + S-adenosyl-L-methionine = N(1)-methylguanosine(37) in tRNA + S-adenosyl-L-homocysteine + H(+). In terms of biological role, specifically methylates the N1 position of guanosine-37 in various cytoplasmic and mitochondrial tRNAs. Methylation is not dependent on the nature of the nucleoside 5' of the target nucleoside. This is the first step in the biosynthesis of wybutosine (yW), a modified base adjacent to the anticodon of tRNAs and required for accurate decoding. The sequence is that of tRNA (guanine(37)-N(1))-methyltransferase from Giardia intestinalis (strain ATCC 50803 / WB clone C6) (Giardia lamblia).